Reading from the N-terminus, the 484-residue chain is MTTLMVQGTTSDAGKSTLVTALCRWLLRQGVAVVPFKPQNMALNSAVTADGGEIGRAQAVQAQACRLQPHTDMNPVLLKPNSDTGAQVIIHGRAVTSMNAVAYHDYKTTAMQAVLASHQRLSAAYPVVMVEGAGSPAEINLRAGDIANMGFAEAVDCPVILVADINRGGVFAHLVGTLELLSTTEQARVKGFVINRFRGDIALLQPGLDWLEQRTGKPVLGVLPYVTDLHLEAEDGIDVRQGVKHARVLKVIVPVLPRISNHTDFDPLRLHSQVDLQFIGPGQPIPAADLIILPGSKSVRGDLAQLRERGWDKAIERHLRYGGKLIGICGGLQMLGREVHDPLGLEGAAGSSQGLGLLDYATVLEAEKQLRNVAGTLSLEAATVTGYEIHAGVTTGPALAQPAVQLADGRHDGAVSADDQILATYLHGLFEGSQSCAALLRWAGLEDVQVIDYEALREHDIERLADLVEKHLDTAQLRQLCGVA.

One can recognise a GATase cobBQ-type domain in the interval 248–435 (VLKVIVPVLP…LHGLFEGSQS (188 aa)). The active-site Nucleophile is cysteine 329. Histidine 427 is a catalytic residue.

Belongs to the CobB/CobQ family. CobQ subfamily.

It participates in cofactor biosynthesis; adenosylcobalamin biosynthesis. Its function is as follows. Catalyzes amidations at positions B, D, E, and G on adenosylcobyrinic A,C-diamide. NH(2) groups are provided by glutamine, and one molecule of ATP is hydrogenolyzed for each amidation. The protein is Cobyric acid synthase of Pseudomonas putida (strain ATCC 700007 / DSM 6899 / JCM 31910 / BCRC 17059 / LMG 24140 / F1).